Here is a 485-residue protein sequence, read N- to C-terminus: MEQTCDDIDEMFSNLLGEMDMLTQSLGVETVQTPSPKVTNEEFSFTVGFKDLNESLNALEDKDLDALMADLVADINEVEQRTLQAQKTSGNQQSVVTQPSTGTNNDFCSKLSPCATITGQFKNDLPPPPPAPDLDLPPPPPPPPPEPLSQEEQEARAKADKIKLALEKLKEAKIKKLVVKVHMYDNSTKSLMVDERQVTRDVLDNLFEKTHCDCSVDWCLYEVYPELQIERFFEDHENVVEVLSDWTRDSENKVLFLEKKEKYALFKNPQNFYLANKGKNESKEMNDKSKEALLEESFCGASVIVPELEGALYLKEDGKKSWKRRYFLLRASGIYYVPKGKTKTSRDLMCFIQFENMNVYYGSQHKVKYKAPTDHCFVLKHPQIQKESQYIKYLCCDDRATLHQWVTGIRIAKYGKTLYDNYKCAVKKAGLSSQWANQGTLEPAAPTGSLSAGAVQANGQIPRVVLPSSAEVAETQKKVDPAIRA.

The span at 84–107 (QAQKTSGNQQSVVTQPSTGTNNDF) shows a compositional bias: polar residues. The interval 84–157 (QAQKTSGNQQ…LSQEEQEARA (74 aa)) is disordered. Positions 125-147 (LPPPPPAPDLDLPPPPPPPPPEP) are enriched in pro residues. A Ras-associating domain is found at 175 to 262 (KKLVVKVHMY…KVLFLEKKEK (88 aa)). The 110-residue stretch at 305 to 414 (VPELEGALYL…WVTGIRIAKY (110 aa)) folds into the PH domain.

This sequence belongs to the MRL family.

Its subcellular location is the cell membrane. The protein localises to the cytoplasm. It is found in the cytoskeleton. Functionally, appears to function in the signal transduction from Ras activation to actin cytoskeletal remodeling. This Gallus gallus (Chicken) protein is Amyloid beta A4 precursor protein-binding family B member 1-interacting protein (APBB1IP).